The following is a 226-amino-acid chain: CD9 antigen (226 aa).

Residues 1–12 (MPVKGGTKCIKY) lie on the Cytoplasmic side of the membrane. The S-palmitoyl cysteine moiety is linked to residue C9. A helical transmembrane segment spans residues 13-33 (LLFGFNFIFWLAGIAVLAVGL). The Extracellular portion of the chain corresponds to 34–53 (WLRFDSQTKSIFEQDSQPSS). A helical transmembrane segment spans residues 54–74 (FYTGVYILIGAGALMMLVGFL). The Cytoplasmic segment spans residues 75–85 (GCCGAVQESQC). S-palmitoyl cysteine attachment occurs at residues C76, C77, and C85. A helical membrane pass occupies residues 86–109 (MLGLFFGFLLVIFAIEIAAAIWGY). The Extracellular portion of the chain corresponds to 110–193 (SHKDEVIQEV…KEVFHNKFHI (84 aa)). 2 disulfide bridges follow: C150–C179 and C151–C165. Residues 194–219 (IGAVGIGIAVVMIFGMIFSMILCCAI) traverse the membrane as a helical segment. 2 S-palmitoyl cysteine lipidation sites follow: C216 and C217. Residues 220–226 (RRSREMV) lie on the Cytoplasmic side of the membrane.

It belongs to the tetraspanin (TM4SF) family. In terms of assembly, forms both disulfide-linked homodimers and higher homooligomers as well as heterooligomers with other members of the tetraspanin family. Interacts (via the second extracellular domain) with integrin ITGAV:ITGB3. Interacts with integrin ITGA6:ITGB1; interaction takes place in oocytes and is involved in sperm-egg fusion. Part of integrin-tetraspanin complexes composed of CD81, beta-1 and beta-2 integrins in the membrane of monocyte/macrophages. Interacts with CD63; identified in a complex with CD63 and ITGB3. Associates with CR2/CD21 and with PTGFRN/CD9P1. Part of a complex composed of CD9, CD81, PTGFRN and IGSF8. Interacts directly with IGSF8. Interacts with PDPN; this interaction is homophilic and attenuates platelet aggregation and pulmonary metastasis induced by PDPN. Interacts (on T cell side) with CD81 at immunological synapses between antigen-presenting cells and T cells. Palmitoylated at a low, basal level in unstimulated platelets. The level of palmitoylation increases when platelets are activated by thrombin (in vitro). The protein exists in three forms with molecular masses between 22 and 27 kDa, and is known to carry covalently linked fatty acids. Palmitoylation by ZDHHC2 regulates CD9 expression, association with other tetraspanin family proteins and function in cell adhesion.

Its subcellular location is the cell membrane. The protein resides in the membrane. It localises to the secreted. It is found in the extracellular exosome. In terms of biological role, integral membrane protein associated with integrins, which regulates different processes, such as sperm-egg fusion, platelet activation and aggregation, and cell adhesion. Present at the cell surface of oocytes and plays a key role in sperm-egg fusion, possibly by organizing multiprotein complexes and the morphology of the membrane required for the fusion. In myoblasts, associates with CD81 and PTGFRN and inhibits myotube fusion during muscle regeneration. In macrophages, associates with CD81 and beta-1 and beta-2 integrins, and prevents macrophage fusion into multinucleated giant cells specialized in ingesting complement-opsonized large particles. Also prevents the fusion between mononuclear cell progenitors into osteoclasts in charge of bone resorption. Acts as a receptor for PSG17. Involved in platelet activation and aggregation. Regulates paranodal junction formation. Involved in cell adhesion, cell motility and tumor metastasis. This is CD9 antigen from Felis catus (Cat).